The primary structure comprises 60 residues: MKSNIKICASWQKKHEQPVYTLADTCPKCNSVTKNTAPAPFDPTDAYGEYRRALKQRVRE.

This sequence belongs to the NOP10 family.

Functionally, involved in ribosome biogenesis; more specifically in 18S rRNA pseudouridylation and in cleavage of pre-rRNA. The chain is Ribosome biogenesis protein Nop10 from Haloquadratum walsbyi (strain DSM 16790 / HBSQ001).